The chain runs to 611 residues: DNA mismatch repair protein MutL (611 aa).

It belongs to the DNA mismatch repair MutL/HexB family.

In terms of biological role, this protein is involved in the repair of mismatches in DNA. It is required for dam-dependent methyl-directed DNA mismatch repair. May act as a 'molecular matchmaker', a protein that promotes the formation of a stable complex between two or more DNA-binding proteins in an ATP-dependent manner without itself being part of a final effector complex. This chain is DNA mismatch repair protein MutL, found in Bartonella bacilliformis (strain ATCC 35685 / KC583 / Herrer 020/F12,63).